A 388-amino-acid chain; its full sequence is Na(+)/H(+) antiporter NhaA (388 aa).

Residues 1–11 (MKHLHRFFSSD) are Cytoplasmic-facing. A helical membrane pass occupies residues 12–31 (ASGGIILIIAAVLAMIMANS). Residues 32–58 (GATSGWYHDFLETPVQLRVGTLEINKN) are Periplasmic-facing. The chain crosses the membrane as a helical span at residues 59 to 80 (MLLWINDALMAVFFLLVGLEVK). The Cytoplasmic portion of the chain corresponds to 81–96 (RELMQGSLASLRQAAF). Residues 97-116 (PVIAAIGGMIVPALLYLAFN) form a helical membrane-spanning segment. Topologically, residues 117–122 (YADPIT) are periplasmic. The helical transmembrane segment at 123–130 (REGWAIPA) threads the bilayer. At 131-154 (ATDIAFALGVLALLGSRVPLALKI) the chain is on the cytoplasmic side. A helical transmembrane segment spans residues 155-176 (FLMALAIIDDLGAIIIIALFYT). At 177 to 180 (NDLS) the chain is on the periplasmic side. The helical transmembrane segment at 181–200 (MASLGVAAVAIAVLVVLNLC) threads the bilayer. Over 201–204 (GVRR) the chain is Cytoplasmic. A helical transmembrane segment spans residues 205-222 (TGVYILVGVVLWTAVLKS). Position 223 (Gly-223) is a topological domain, periplasmic. A helical membrane pass occupies residues 224 to 236 (VHATLAGVIVGFF). At 237 to 253 (IPLKEKHGRSPAKRLEH) the chain is on the cytoplasmic side. The chain crosses the membrane as a helical span at residues 254–272 (VLHPWVAYLILPLFAFANA). Residues 273–286 (GVSLQGVTLEGLTS) are Periplasmic-facing. Residues 287 to 310 (ILPLGIIAGLLIGKPLGISLFCWL) traverse the membrane as a helical segment. Residues 311-339 (ALRLKLAHLPEGTTYQQIMAVGILCGIGF) lie on the Cytoplasmic side of the membrane. The helical transmembrane segment at 340 to 350 (TMSIFIASLAF) threads the bilayer. The Periplasmic segment spans residues 351–357 (GSVDPEL). A helical membrane pass occupies residues 358 to 380 (INWAKLGILVGSISSAVIGYSWL). Over 381–388 (RVRLRPSV) the chain is Cytoplasmic.

Belongs to the NhaA Na(+)/H(+) (TC 2.A.33) antiporter family.

It localises to the cell inner membrane. It catalyses the reaction Na(+)(in) + 2 H(+)(out) = Na(+)(out) + 2 H(+)(in). In terms of biological role, na(+)/H(+) antiporter that extrudes sodium in exchange for external protons. This chain is Na(+)/H(+) antiporter NhaA, found in Escherichia coli O1:K1 / APEC.